The sequence spans 671 residues: NADH-quinone oxidoreductase subunit G (671 aa).

One can recognise a 2Fe-2S ferredoxin-type domain in the interval Met1–Met78. 4 residues coordinate [2Fe-2S] cluster: Cys34, Cys45, Cys48, and Cys62. A 4Fe-4S His(Cys)3-ligated-type domain is found at Met78–Gly117. [4Fe-4S] cluster is bound by residues His94, Cys98, Cys101, Cys107, Cys146, Cys149, Cys152, and Cys196. In terms of domain architecture, 4Fe-4S Mo/W bis-MGD-type spans Leu215–Arg271.

It belongs to the complex I 75 kDa subunit family. Requires [2Fe-2S] cluster as cofactor. The cofactor is [4Fe-4S] cluster.

It catalyses the reaction a quinone + NADH + 5 H(+)(in) = a quinol + NAD(+) + 4 H(+)(out). Functionally, NDH-1 shuttles electrons from NADH, via FMN and iron-sulfur (Fe-S) centers, to quinones in the respiratory chain. Couples the redox reaction to proton translocation (for every two electrons transferred, four hydrogen ions are translocated across the cytoplasmic membrane), and thus conserves the redox energy in a proton gradient. In Rickettsia felis (strain ATCC VR-1525 / URRWXCal2) (Rickettsia azadi), this protein is NADH-quinone oxidoreductase subunit G (nuoG).